The primary structure comprises 212 residues: 3-oxo-tetronate 4-phosphate decarboxylase (212 aa).

E79 functions as the Proton acceptor in the catalytic mechanism. E79, H98, and H100 together coordinate Zn(2+). Residue Y125 is the Proton donor of the active site. H165 contacts Zn(2+).

This sequence belongs to the aldolase class II family. AraD/FucA subfamily. It depends on Zn(2+) as a cofactor.

The enzyme catalyses 3-dehydro-4-O-phospho-D-erythronate + H(+) = dihydroxyacetone phosphate + CO2. It catalyses the reaction 3-dehydro-4-O-phospho-L-erythronate + H(+) = dihydroxyacetone phosphate + CO2. Functionally, catalyzes the decarboxylation of 3-oxo-tetronate 4-phosphate to dihydroxyacetone phosphate (DHAP) and CO(2). The chain is 3-oxo-tetronate 4-phosphate decarboxylase from Escherichia coli O6:H1 (strain CFT073 / ATCC 700928 / UPEC).